The primary structure comprises 537 residues: Putative cysteine ligase BshC (537 aa).

A coiled-coil region spans residues 422–450 (IEKVEGMIEQQRRLNKDLLDEVAGNQNNI).

Belongs to the BshC family.

Involved in bacillithiol (BSH) biosynthesis. May catalyze the last step of the pathway, the addition of cysteine to glucosamine malate (GlcN-Mal) to generate BSH. The protein is Putative cysteine ligase BshC of Staphylococcus aureus (strain COL).